Here is a 108-residue protein sequence, read N- to C-terminus: uncharacterized protein (108 aa).

The disordered stretch occupies residues 75–94; the sequence is TPQVSSFPSSTTSLSHSCTT. Residues 79–94 are compositionally biased toward low complexity; sequence SSFPSSTTSLSHSCTT.

This is an uncharacterized protein from Homo sapiens (Human).